The chain runs to 397 residues: Elongation factor Tu (397 aa).

The region spanning 10-206 (KPHVNIGTIG…AVDESIPEPQ (197 aa)) is the tr-type G domain. Residues 19–26 (GHIDHGKT) form a G1 region. Residue 19–26 (GHIDHGKT) coordinates GTP. T26 is a binding site for Mg(2+). Positions 62-66 (GITIS) are G2. The interval 83–86 (DCPG) is G3. Residues 83–87 (DCPGH) and 138–141 (NKAD) each bind GTP. The G4 stretch occupies residues 138–141 (NKAD). The segment at 176–178 (SAL) is G5.

Belongs to the TRAFAC class translation factor GTPase superfamily. Classic translation factor GTPase family. EF-Tu/EF-1A subfamily. Monomer.

It is found in the cytoplasm. The enzyme catalyses GTP + H2O = GDP + phosphate + H(+). Its function is as follows. GTP hydrolase that promotes the GTP-dependent binding of aminoacyl-tRNA to the A-site of ribosomes during protein biosynthesis. The sequence is that of Elongation factor Tu from Frankia casuarinae (strain DSM 45818 / CECT 9043 / HFP020203 / CcI3).